Here is a 130-residue protein sequence, read N- to C-terminus: NADH-ubiquinone oxidoreductase chain 1 (130 aa).

A helical transmembrane segment spans residues 45-65; that stretch reads SILFMSLFSVMFCLVVYSYLW.

Belongs to the complex I subunit 1 family.

It is found in the mitochondrion inner membrane. The catalysed reaction is a ubiquinone + NADH + 5 H(+)(in) = a ubiquinol + NAD(+) + 4 H(+)(out). Functionally, core subunit of the mitochondrial membrane respiratory chain NADH dehydrogenase (Complex I) that is believed to belong to the minimal assembly required for catalysis. Complex I functions in the transfer of electrons from NADH to the respiratory chain. The immediate electron acceptor for the enzyme is believed to be ubiquinone. The protein is NADH-ubiquinone oxidoreductase chain 1 (ND1) of Artemia salina (Brine shrimp).